A 370-amino-acid chain; its full sequence is Maturase K (370 aa).

This sequence belongs to the intron maturase 2 family. MatK subfamily.

Its subcellular location is the plastid. It is found in the chloroplast. Functionally, usually encoded in the trnK tRNA gene intron. Probably assists in splicing its own and other chloroplast group II introns. The chain is Maturase K from Marchantia polymorpha (Common liverwort).